The primary structure comprises 860 residues: Leucine--tRNA ligase (860 aa).

The 'HIGH' region motif lies at 42–52 (PYPSGRLHMGH). Residues 619–623 (KMSKS) carry the 'KMSKS' region motif. Residue Lys-622 participates in ATP binding.

Belongs to the class-I aminoacyl-tRNA synthetase family.

It localises to the cytoplasm. It catalyses the reaction tRNA(Leu) + L-leucine + ATP = L-leucyl-tRNA(Leu) + AMP + diphosphate. This is Leucine--tRNA ligase from Escherichia coli (strain SE11).